Consider the following 792-residue polypeptide: Phenylalanine--tRNA ligase beta subunit (792 aa).

One can recognise a tRNA-binding domain in the interval 39 to 147; that stretch reads AAAFSGVVVG…DNAPIGQDIR (109 aa). A B5 domain is found at 400 to 475; it reads PERPAVRLRP…RLHGYDAIPA (76 aa). Mg(2+) contacts are provided by D453, D459, E462, and E463. An FDX-ACB domain is found at 698–791; it reads SRQPAVTRDV…TETSLGARLR (94 aa).

This sequence belongs to the phenylalanyl-tRNA synthetase beta subunit family. Type 1 subfamily. As to quaternary structure, tetramer of two alpha and two beta subunits. It depends on Mg(2+) as a cofactor.

The protein localises to the cytoplasm. The enzyme catalyses tRNA(Phe) + L-phenylalanine + ATP = L-phenylalanyl-tRNA(Phe) + AMP + diphosphate + H(+). In Aromatoleum aromaticum (strain DSM 19018 / LMG 30748 / EbN1) (Azoarcus sp. (strain EbN1)), this protein is Phenylalanine--tRNA ligase beta subunit.